Reading from the N-terminus, the 476-residue chain is uncharacterized protein (476 aa).

The stretch at 147–204 forms a coiled coil; the sequence is DVRLAELRRRRAELEAEIAAVEAGDIAVLDPTAVRDRYQQLSTTARELLSDFREVEEN.

This is an uncharacterized protein from Mycolicibacterium smegmatis (strain ATCC 700084 / mc(2)155) (Mycobacterium smegmatis).